The chain runs to 215 residues: 3-isopropylmalate dehydratase small subunit (215 aa).

Belongs to the LeuD family. LeuD type 1 subfamily. As to quaternary structure, heterodimer of LeuC and LeuD.

It catalyses the reaction (2R,3S)-3-isopropylmalate = (2S)-2-isopropylmalate. The protein operates within amino-acid biosynthesis; L-leucine biosynthesis; L-leucine from 3-methyl-2-oxobutanoate: step 2/4. Its function is as follows. Catalyzes the isomerization between 2-isopropylmalate and 3-isopropylmalate, via the formation of 2-isopropylmaleate. This chain is 3-isopropylmalate dehydratase small subunit, found in Xylella fastidiosa (strain 9a5c).